Consider the following 861-residue polypeptide: Probable beta-glucosidase A (861 aa).

Positions 1 to 19 (MKLSILEAAALTAASVASA) are cleaved as a signal peptide. N-linked (GlcNAc...) asparagine glycosylation is found at N62, N212, and N253. The active site involves D281. Residues N316, N323, N355, N524, N543, N565, N669, and N713 are each glycosylated (N-linked (GlcNAc...) asparagine). The disordered stretch occupies residues 735–754 (PEGATDGSPQPRLPASGGPG).

The protein belongs to the glycosyl hydrolase 3 family.

Its subcellular location is the secreted. It catalyses the reaction Hydrolysis of terminal, non-reducing beta-D-glucosyl residues with release of beta-D-glucose.. Its pathway is glycan metabolism; cellulose degradation. Functionally, beta-glucosidases are one of a number of cellulolytic enzymes involved in the degradation of cellulosic biomass. Catalyzes the last step releasing glucose from the inhibitory cellobiose. This is Probable beta-glucosidase A (bglA) from Aspergillus terreus.